Consider the following 333-residue polypeptide: Putative transporter MamV (333 aa).

5 helical membrane-spanning segments follow: residues 19-39 (AWLDMFTALALAVFKTALGVL), 86-106 (FLSANFIGISLMAGAAAMLWY), 111-131 (LGSGHVQVPEVWAVFGALISA), 170-190 (VLAGIVLSILGWVAADHLAAI), and 191-211 (LVSLLVLRIGAVIAWDSIHGL).

Belongs to the cation diffusion facilitator (CDF) transporter (TC 2.A.4) family.

The protein localises to the cell inner membrane. Its function is as follows. Expression of just the minimal mamAB gene cluster (amb0961 to amb0978), including this gene, is sufficient to form a minimal magnetosome chain with small magnetite particles. In Paramagnetospirillum magneticum (strain ATCC 700264 / AMB-1) (Magnetospirillum magneticum), this protein is Putative transporter MamV.